The following is a 110-amino-acid chain: UPF0132 membrane protein MJ1443 (110 aa).

3 helical membrane-spanning segments follow: residues 15 to 35 (IEGA…YILE), 49 to 69 (IILF…PYGW), and 70 to 90 (MLSG…MYKA).

Belongs to the UPF0132 family.

Its subcellular location is the cell membrane. The polypeptide is UPF0132 membrane protein MJ1443 (Methanocaldococcus jannaschii (strain ATCC 43067 / DSM 2661 / JAL-1 / JCM 10045 / NBRC 100440) (Methanococcus jannaschii)).